Reading from the N-terminus, the 220-residue chain is Protein Syd (220 aa).

This sequence belongs to the Syd family.

The protein localises to the cell inner membrane. Functionally, interacts with the SecY protein in vivo. May bind preferentially to an uncomplexed state of SecY, thus functioning either as a chelating agent for excess SecY in the cell or as a regulatory factor that negatively controls the translocase function. This chain is Protein Syd, found in Shewanella loihica (strain ATCC BAA-1088 / PV-4).